Reading from the N-terminus, the 266-residue chain is tRNA pseudouridine synthase A (266 aa).

The Nucleophile role is filled by Asp-53. Substrate is bound at residue Tyr-109.

It belongs to the tRNA pseudouridine synthase TruA family.

The catalysed reaction is uridine(38/39/40) in tRNA = pseudouridine(38/39/40) in tRNA. In terms of biological role, formation of pseudouridine at positions 38, 39 and 40 in the anticodon stem and loop of transfer RNAs. The chain is tRNA pseudouridine synthase A from Methanocella arvoryzae (strain DSM 22066 / NBRC 105507 / MRE50).